The primary structure comprises 367 residues: Protein-glutamate methylesterase/protein-glutamine glutaminase 2 (367 aa).

The region spanning 3–120 is the Response regulatory domain; it reads SVVVVDDSAF…SLDIVRIEND (118 aa). 4-aspartylphosphate is present on aspartate 54. The interval 132-174 is disordered; it reads RMLRTPRPVRPAPTASAPAQTAQVASAAPATAPSRPAMPATRA. Residues 143–174 are compositionally biased toward low complexity; sequence APTASAPAQTAQVASAAPATAPSRPAMPATRA. In terms of domain architecture, CheB-type methylesterase spans 175–367; the sequence is SRPVRDVVAI…AAAIMNGLYK (193 aa). Catalysis depends on residues serine 187, histidine 214, and aspartate 310.

The protein belongs to the CheB family. Phosphorylated by CheA. Phosphorylation of the N-terminal regulatory domain activates the methylesterase activity.

It is found in the cytoplasm. It carries out the reaction [protein]-L-glutamate 5-O-methyl ester + H2O = L-glutamyl-[protein] + methanol + H(+). The catalysed reaction is L-glutaminyl-[protein] + H2O = L-glutamyl-[protein] + NH4(+). Its function is as follows. Involved in chemotaxis. Part of a chemotaxis signal transduction system that modulates chemotaxis in response to various stimuli. Catalyzes the demethylation of specific methylglutamate residues introduced into the chemoreceptors (methyl-accepting chemotaxis proteins or MCP) by CheR. Also mediates the irreversible deamidation of specific glutamine residues to glutamic acid. This Nitratidesulfovibrio vulgaris (strain ATCC 29579 / DSM 644 / CCUG 34227 / NCIMB 8303 / VKM B-1760 / Hildenborough) (Desulfovibrio vulgaris) protein is Protein-glutamate methylesterase/protein-glutamine glutaminase 2.